The sequence spans 181 residues: Swi1-interacting protein swi3 (181 aa).

The tract at residues 1–47 is disordered; that stretch reads MSTAASDSGVEKLVEENKREEVKKNEEEKEFDLGLEENPDSVKKPRK. The span at 9–27 shows a compositional bias: basic and acidic residues; sequence GVEKLVEENKREEVKKNEE. The segment covering 28–39 has biased composition (acidic residues); it reads EKEFDLGLEENP.

It belongs to the CSM3 family. Fork protection complex (FPC) consisting of swi1 and swi3 interacts with mat1 cis-acting sequences and mat1-proximal polar-terminator of replication (RTS1).

The protein localises to the nucleus. Its function is as follows. Forms a fork protection complex (FPC) with swi1. FPC coordinates leading and lagging strand synthesis and moves with the replication fork. It is required for programmed fork-pausing which is necessary for mating-type switching. FPC stabilizes replication forks in a configuration that is recognized by replication checkpoint sensors. It is involved in termination at the mat1-proximal polar-terminator of replication (RTS1) and also required for activation of the Rad53-like checkpoint kinase cds1. The sequence is that of Swi1-interacting protein swi3 (swi3) from Schizosaccharomyces pombe (strain 972 / ATCC 24843) (Fission yeast).